The chain runs to 859 residues: MSGSTAVALLFCVLSCSVWGAGSKASHEHNAAAAAQDVTLKVQVSDVSTHQPIADAVIEIFANQVSAASGTTGADGTALVKLQYKLGSQLIVTATKQAYVPNSAPWRPLRLPVFSSLSLGLLPERSATLMVYDDIVQIVSGFQGSRLQPRVHFQRRALNLPGNATYKDLAAFLTAASTPWEIDSFPYLQGSDGNSTGNNSRFDLTPVTAVSFHLLNSDGTDIPVNGPIYVTVPLPTHSSLKHNAHVPAWRFDQKHGTWLKSSIGIIQQEGSQLTWTYIAPQMGYWVAAMSPSHPDPVVTQDITSYHTIFLLAILGGIAFILLVLLCILLYYCRRKCLKPRQHHRKLQLSTALDCSKKDQATSMSHINLISPIHMEMLSSSGEADMHTPMLKPSYNTSRDFGSREELLSHQEEKSRMSLDNLTPSGTLRQVYNKSLDHILMKSRKSAEISEEYTSTMKDEYRRSYNSVICQPLFESKDKDLLSSTNHVTAGSKPNIQEQMHPVPSAPEPEQLIDRRSNECMMSRSVDHLERPTSFSRPGQLICYNSVDQVNDSVYRNVLPTLVIPAHYVKLPGEHPFVSQQLIVSAEQQFEIERLQAELSHAQQMQPPPLSAQAISQQHLQDGEGVEWSTQNAMMSESVSIPASLNDAAIAQMNGEVQLLTEKALMELGGGRPMPHPRAWFVSLDGRSNAHIRHSYIDLQRAGKNGSNDASLDSGVDMNEPKLGRKLRGEKLSMLHSSMQHPTLQEHQQLNQVNVSDSTAYTQLVYLEDMDQSPSECGTAVCSPEDSRPFIEAPAKKSGSQTPSLQEETIKRTTESSPLPLSSPEHEFNINDDSGEDQGENKKSPWQKREERPLLAFNKK.

A signal peptide spans 1 to 20 (MSGSTAVALLFCVLSCSVWG). Topologically, residues 21–307 (AGSKASHEHN…VTQDITSYHT (287 aa)) are extracellular. Residues asparagine 163, asparagine 194, and asparagine 198 are each glycosylated (N-linked (GlcNAc...) asparagine). A helical membrane pass occupies residues 308 to 328 (IFLLAILGGIAFILLVLLCIL). Residues 329 to 859 (LYYCRRKCLK…ERPLLAFNKK (531 aa)) lie on the Cytoplasmic side of the membrane. Disordered stretches follow at residues 397 to 421 (SRDF…LDNL), 484 to 509 (TNHV…PEPE), and 771 to 859 (QSPS…FNKK). The span at 400 to 416 (FGSREELLSHQEEKSRM) shows a compositional bias: basic and acidic residues. Composition is skewed to polar residues over residues 484 to 497 (TNHV…NIQE) and 797 to 806 (SGSQTPSLQE). Basic and acidic residues predominate over residues 838–852 (GENKKSPWQKREERP).

This sequence belongs to the FAM171 family.

It localises to the cell membrane. In terms of biological role, may be involved in the regulation of the cytoskeletal dynamics, plays a role in actin stress fiber formation. The protein is Protein FAM171A1 (fam171a1) of Xenopus laevis (African clawed frog).